A 923-amino-acid chain; its full sequence is MDSIGSSGLRQGEETLSCSEEGLPGPSDSSELVQECLQQFKVTRAQLQQIQASLLGSMEQALRGQASPAPAVRMLPTYVGSTPHGTEQGDFVVLELGATGASLRVLWVTLTGIEGHRVEPRSQEFVIPQEVMLGAGQQLFDFAAHCLSEFLDAQPVNKQGLQLGFSFSFPCHQTGLDRSTLISWTKGFRCSGVEGQDVVQLLRDAIRRQGAYNIDVVAVVNDTVGTMMGCEPGVRPCEVGLVVDTGTNACYMEEARHVAVLDEDRGRVCVSVEWGSFSDDGALGPVLTTFDHTLDHESLNPGAQRFEKMIGGLYLGELVRLVLAHLARCGVLFGGCTSPALLSQGSILLEHVAEMEDPSTGAARVHAILQDLGLSPGASDVELVQHVCAAVCTRAAQLCAAALAAVLSCLQHSREQQTLQVAVATGGRVCERHPRFCSVLQGTVMLLAPECDVSLIPSVDGGGRGVAMVTAVAARLAAHRRLLEETLAPFRLNHDQLAAVQAQMRKAMAKGLRGEASSLRMLPTFVRATPDGSERGDFLALDLGGTNFRVLLVRVTTGVQITSEIYSIPETVAQGSGQQLFDHIVDCIVDFQQKQGLSGQSLPLGFTFSFPCRQLGLDQGILLNWTKGFKASDCEGQDVVSLLREAITRRQAVELNVVAIVNDTVGTMMSCGYEDPRCEIGLIVGTGTNACYMEELRNVAGVPGDSGRMCINMEWGAFGDDGSLAMLSTRFDASVDQASINPGKQRFEKMISGMYLGEIVRHILLHLTSLGVLFRGQQIQRLQTRDIFKTKFLSEIESDSLALRQVRAILEDLGLPLTSDDALMVLEVCQAVSQRAAQLCGAGVAAVVEKIRENRGLEELAVSVGVDGTLYKLHPRFSSLVAATVRELAPRCVVTFLQSEDGSGKGAALVTAVACRLAQLTRV.

Over residues M1 to C18 the composition is skewed to polar residues. The tract at residues M1–S30 is disordered. Hexokinase domains lie at S27 to A471 and A477 to A912. Residues H84 to V220 are hexokinase small subdomain 1. E95 to S102 is a binding site for ATP. E95–R104 contacts D-glucose 6-phosphate. Residues S168, T185 to K186, and N221 to D222 each bind D-glucose. Residues N221 to D460 are hexokinase large subdomain 1. D-glucose 6-phosphate-binding residues include D222 and T245. D-glucose contacts are provided by residues N248, E273, and Q304–E307. G426–R428 is a D-glucose 6-phosphate binding site. Residues S438–V439 and D542–N547 each bind ATP. The interval D531 to V661 is hexokinase small subdomain 2. D-glucose 6-phosphate is bound at residue D542 to T546. D-glucose is bound by residues S609–F610, T626–K627, and N662–D663. Residues N662–D901 form a hexokinase large subdomain 2 region. Residues D663 and T686 each coordinate D-glucose 6-phosphate. An ATP-binding site is contributed by T686. D-glucose contacts are provided by residues T688–N689, E714, and E748. ATP is bound by residues G753–M754, T790–S794, and T869–L873. Residues D867–T869 and S903 each bind D-glucose 6-phosphate.

The protein belongs to the hexokinase family.

The enzyme catalyses a D-hexose + ATP = a D-hexose 6-phosphate + ADP + H(+). It carries out the reaction D-fructose + ATP = D-fructose 6-phosphate + ADP + H(+). It catalyses the reaction D-glucose + ATP = D-glucose 6-phosphate + ADP + H(+). It participates in carbohydrate metabolism; hexose metabolism. The protein operates within carbohydrate degradation; glycolysis; D-glyceraldehyde 3-phosphate and glycerone phosphate from D-glucose: step 1/4. Its activity is regulated as follows. Hexokinase is an allosteric enzyme inhibited by its product D-glucose 6-phosphate. Its function is as follows. Catalyzes the phosphorylation of hexose, such as D-glucose and D-fructose, to hexose 6-phosphate (D-glucose 6-phosphate and D-fructose 6-phosphate, respectively). Mediates the initial step of glycolysis by catalyzing phosphorylation of D-glucose to D-glucose 6-phosphate. The polypeptide is Hexokinase-3 (Homo sapiens (Human)).